Reading from the N-terminus, the 475-residue chain is UDP-N-acetylmuramate--L-alanine ligase (475 aa).

Position 125–131 (125–131) interacts with ATP; it reads GTHGKTS.

This sequence belongs to the MurCDEF family.

The protein resides in the cytoplasm. The catalysed reaction is UDP-N-acetyl-alpha-D-muramate + L-alanine + ATP = UDP-N-acetyl-alpha-D-muramoyl-L-alanine + ADP + phosphate + H(+). Its pathway is cell wall biogenesis; peptidoglycan biosynthesis. Cell wall formation. This Mycolicibacterium gilvum (strain PYR-GCK) (Mycobacterium gilvum (strain PYR-GCK)) protein is UDP-N-acetylmuramate--L-alanine ligase.